Consider the following 115-residue polypeptide: UPF0738 protein SACOL1009 (115 aa).

The protein belongs to the UPF0738 family.

In Staphylococcus aureus (strain COL), this protein is UPF0738 protein SACOL1009.